The primary structure comprises 367 residues: Biotin synthase (367 aa).

Residues asparagine 67 to serine 291 enclose the Radical SAM core domain. [4Fe-4S] cluster contacts are provided by cysteine 82, cysteine 86, and cysteine 89. [2Fe-2S] cluster contacts are provided by cysteine 128, cysteine 159, cysteine 219, and arginine 295.

It belongs to the radical SAM superfamily. Biotin synthase family. As to quaternary structure, homodimer. [4Fe-4S] cluster serves as cofactor. Requires [2Fe-2S] cluster as cofactor.

It catalyses the reaction (4R,5S)-dethiobiotin + (sulfur carrier)-SH + 2 reduced [2Fe-2S]-[ferredoxin] + 2 S-adenosyl-L-methionine = (sulfur carrier)-H + biotin + 2 5'-deoxyadenosine + 2 L-methionine + 2 oxidized [2Fe-2S]-[ferredoxin]. Its pathway is cofactor biosynthesis; biotin biosynthesis; biotin from 7,8-diaminononanoate: step 2/2. In terms of biological role, catalyzes the conversion of dethiobiotin (DTB) to biotin by the insertion of a sulfur atom into dethiobiotin via a radical-based mechanism. This is Biotin synthase from Psychrobacter sp. (strain PRwf-1).